A 1712-amino-acid chain; its full sequence is U3 small nucleolar RNA-associated protein 10 (1712 aa).

HEAT repeat units follow at residues 164-202, 490-528, 564-605, 987-1025, 1236-1275, 1605-1646, and 1667-1705; these read EELV…GRGE, TCDF…ASGS, TLLS…PKHG, TQTI…AFEH, VISL…RFGK, EEVT…DSAA, and LGLL…VLGE.

The protein belongs to the HEATR1/UTP10 family. In terms of assembly, component of the ribosomal small subunit (SSU) processome.

It is found in the nucleus. Its subcellular location is the nucleolus. Its function is as follows. Involved in nucleolar processing of pre-18S ribosomal RNA. Involved in ribosome biosynthesis. The protein is U3 small nucleolar RNA-associated protein 10 of Phaeosphaeria nodorum (strain SN15 / ATCC MYA-4574 / FGSC 10173) (Glume blotch fungus).